The following is a 508-amino-acid chain: 2'-5'-oligoadenylate synthase-like protein 2 (508 aa).

S69 lines the ATP pocket. The Mg(2+) site is built by D81, D83, and D154. 2 residues coordinate ATP: R213 and K216. The Ubiquitin-like domain occupies 435 to 473; that stretch reads ILVFVKYPGGQSKPFTIDPDDTILDLKEKIEDAGGPCAE.

It belongs to the 2-5A synthase family. The cofactor is Mg(2+). As to expression, strongly expressed in spleen dendritic cells, whereas, in bone marrow-derived dendritic cells, the amount increases during the maturation process. Expressed in many organs, the highest levels being in thymus, lung, and bone marrow.

It carries out the reaction 3 ATP = 5'-triphosphoadenylyl-(2'-&gt;5')-adenylyl-(2'-&gt;5')-adenosine + 2 diphosphate. Its activity is regulated as follows. Produced as a latent enzyme which is activated by dsRNA generated during the course of viral infection. The dsRNA activator must be at least 15 nucleotides long, and no modification of the 2'-hydroxyl group is tolerated. ssRNA or dsDNA do not act as activators. Its function is as follows. Interferon-induced, dsRNA-activated antiviral enzyme which plays a critical role in cellular innate antiviral response. Synthesizes oligomers of 2'-5'-oligoadenylates (2-5A) from ATP which then bind to the inactive monomeric form of ribonuclease L (RNase L) leading to its dimerization and subsequent activation. Activation of RNase L leads to degradation of cellular as well as viral RNA, resulting in the inhibition of protein synthesis, thus terminating viral replication. Can mediate the antiviral effect via the classical RNase L-dependent pathway or an alternative antiviral pathway independent of RNase L. The sequence is that of 2'-5'-oligoadenylate synthase-like protein 2 (Oasl2) from Mus musculus (Mouse).